We begin with the raw amino-acid sequence, 422 residues long: Blood group Rh(D) polypeptide (422 aa).

A run of 12 helical transmembrane segments spans residues 13–33, 43–63, 76–96, 113–135, 137–159, 170–190, 215–235, 244–266, 272–292, 294–314, 335–355, and 372–392; these read LPLWAFGLQVTFILLFYFLIG, FMAIYQVIQDLTLVAALGFGF, VAFSFFMLALGVQGTILLDYF, FLSIQRATISTLPLLISAGAVLG, VNLVQLAVMVLVEAMTFGAIRVA, IIMMYGHVFGAYFGLTVAWWL, LFAMLGTLFLWIFWPSINSAL, AVFNTYYALAVSTVTATSMSALS, INMVHIHNAVLAGGVAVGAPS, LISSPWIAMVLGLTAGLISIW, YTFGLPGLLGALTYYCLHIIA, and VGALSFAMAMGMVTGLLTGCL.

Belongs to the ammonium transporter (TC 2.A.49) family. Rh subfamily. In terms of processing, palmitoylated.

It localises to the cell membrane. May be part of an oligomeric complex which is likely to have a transport or channel function in the erythrocyte membrane. The sequence is that of Blood group Rh(D) polypeptide (Rhd) from Rattus norvegicus (Rat).